The sequence spans 136 residues: Histone H3.Y (136 aa).

Residues 1–16 show a composition bias toward low complexity; the sequence is MARTKQTARKATAWQA. The tract at residues 1–43 is disordered; it reads MARTKQTARKATAWQAPRKPLATKAAGKRAPPTGGIKKPHRYK. Arg3 carries the post-translational modification Asymmetric dimethylarginine. Citrulline; alternate is present on Arg3. Thr4 is modified (phosphothreonine). Lys5 is subject to Allysine; alternate. An N6,N6,N6-trimethyllysine; alternate modification is found at Lys5. N6,N6-dimethyllysine; alternate is present on Lys5. Lys5 is subject to N6-(2-hydroxyisobutyryl)lysine; alternate. Lys5 bears the N6-(beta-hydroxybutyryl)lysine; alternate mark. The residue at position 5 (Lys5) is an N6-acetyllysine; alternate. Residue Lys5 is modified to N6-crotonyllysine; alternate. N6-methyllysine; alternate is present on Lys5. 5-glutamyl dopamine; alternate is present on Gln6. Gln6 is modified (5-glutamyl serotonin; alternate). Residue Thr7 is modified to Phosphothreonine. Arg9 carries the citrulline; alternate modification. Arg9 carries the post-translational modification Symmetric dimethylarginine. Lys10 carries the post-translational modification N6,N6,N6-trimethyllysine; alternate. Lys10 bears the N6,N6-dimethyllysine; alternate mark. Residue Lys10 is modified to N6-(2-hydroxyisobutyryl)lysine; alternate. Position 10 is an N6-(beta-hydroxybutyryl)lysine; alternate (Lys10). N6-acetyllysine; alternate is present on Lys10. At Lys10 the chain carries N6-crotonyllysine; alternate. Residue Lys10 is modified to N6-methyllysine; alternate. Lys10 is modified (N6-butyryllysine; alternate). The residue at position 10 (Lys10) is an N6-lactoyllysine; alternate. Thr12 carries the phosphothreonine modification. Position 18 is an asymmetric dimethylarginine (Arg18). Arg18 is modified (citrulline; alternate). Residues Lys19, Lys24, Lys28, and Lys37 each carry the N6-(2-hydroxyisobutyryl)lysine; alternate modification. Residues Lys19, Lys24, and Lys28 each carry the N6-(beta-hydroxybutyryl)lysine; alternate modification. N6-acetyllysine; alternate occurs at positions 19, 24, 28, and 37. 3 positions are modified to N6-crotonyllysine; alternate: Lys19, Lys24, and Lys28. 4 positions are modified to N6-methyllysine; alternate: Lys19, Lys24, Lys28, and Lys37. Lys19 and Lys24 each carry N6-butyryllysine; alternate. Residues Lys19, Lys24, and Lys28 each carry the N6-lactoyllysine; alternate modification. Residues Lys19, Lys24, and Lys28 each carry the N6-glutaryllysine; alternate modification. Residues Lys28 and Lys37 each carry the N6,N6,N6-trimethyllysine; alternate modification. Lys28 and Lys37 each carry N6,N6-dimethyllysine; alternate. Lys38 is subject to N6-methyllysine. Phosphotyrosine is present on Tyr42. Lys57 is modified (N6,N6,N6-trimethyllysine; alternate). Residue Lys57 is modified to N6-(2-hydroxyisobutyryl)lysine; alternate. An N6-(beta-hydroxybutyryl)lysine; alternate modification is found at Lys57. Lys57 is subject to N6-acetyllysine; alternate. Lys57 carries the post-translational modification N6-crotonyllysine; alternate. Position 57 is an N6-lactoyllysine; alternate (Lys57). The residue at position 57 (Lys57) is an N6-glutaryllysine; alternate. An N6-methyllysine modification is found at Lys57. N6-succinyllysine; alternate is present on Lys57. Ser58 carries the phosphoserine modification. Position 65 is an N6-(2-hydroxyisobutyryl)lysine; alternate (Lys65). Lys65 carries the N6-methyllysine; alternate modification. Residue Ser87 is modified to Phosphoserine. Thr108 is subject to Phosphothreonine.

The protein belongs to the histone H3 family. The nucleosome is a histone octamer containing two molecules each of H2A, H2B, H3 and H4 assembled in one H3-H4 heterotetramer and two H2A-H2B heterodimers. The octamer wraps approximately 147 bp of DNA. Interacts with HIRA, a chaperone required for its incorporation into nucleosomes. Does not interact with DAXX chaperone. Acetylation is generally linked to gene activation. Acetylation on Lys-10 (H3K9ac) impairs methylation at Arg-9 (H3R8me2s). Acetylation on Lys-19 (H3K18ac) and Lys-24 (H3K24ac) favors methylation at Arg-18 (H3R17me). Post-translationally, citrullination at Arg-9 (H3R8ci) and/or Arg-18 (H3R17ci) impairs methylation and represses transcription. In terms of processing, asymmetric dimethylation at Arg-18 (H3R17me2a) is linked to gene activation. Symmetric dimethylation at Arg-9 (H3R8me2s) is linked to gene repression. Asymmetric dimethylation at Arg-3 (H3R2me2a) is linked to gene repression and is mutually exclusive with H3 Lys-5 methylation (H3K4me2 and H3K4me3). H3R2me2a is present at the 3' of genes regardless of their transcription state and is enriched on inactive promoters, while it is absent on active promoters. Methylation at Lys-5 (H3K4me) facilitates subsequent acetylation of H3 and H4. Methylation at Lys-10 (H3K9me) and Lys-28 (H3K27me), which are linked to gene repression, are underrepresented. Methylation at Lys-10 (H3K9me) is a specific target for HP1 proteins (CBX1, CBX3 and CBX5) and prevents subsequent acetylation of H3 and H4. Post-translationally, phosphorylation at Thr-7 (H3T6ph) is a specific tag for epigenetic transcriptional activation that prevents demethylation of Lys-5 (H3K4me) by LSD1/KDM1A. At centromeres, specifically phosphorylated at Thr-12 (H3T11ph) from prophase to early anaphase. Phosphorylation at Thr-12 (H3T11ph) is a specific tag for epigenetic transcriptional activation that promotes demethylation of Lys-10 (H3K9me). Phosphorylation at Tyr-42 (H3Y41ph) promotes exclusion of CBX5 (HP1 alpha) from chromatin. In terms of processing, lysine deamination at Lys-5 (H3K4all) to form allysine. Allysine formation only takes place on H3K4me3 and results in gene repression. Crotonylation (Kcr) is specifically present in male germ cells and marks testis-specific genes in post-meiotic cells, including X-linked genes that escape sex chromosome inactivation in haploid cells. Crotonylation marks active promoters and enhancers and confers resistance to transcriptional repressors. It is also associated with post-meiotically activated genes on autosomes. Post-translationally, butyrylation of histones marks active promoters and competes with histone acetylation. It is present during late spermatogenesis. Expressed at low level in some tissues, such as testis and brain.

Its subcellular location is the nucleus. It is found in the chromosome. Primate-specific variant histone H3, which constitutes a core component of nucleosomes. Histone H3.Y-containing nucleosomes accumulate around transcription start sites and have flexible DNA ends, suggesting that they form relaxed chromatin that allows transcription factor access. Histone H1 binds less efficiently to histone H3.Y-containing nucleosomes. Nucleosomes wrap and compact DNA into chromatin, limiting DNA accessibility to the cellular machineries which require DNA as a template. Histones thereby play a central role in transcription regulation, DNA repair, DNA replication and chromosomal stability. DNA accessibility is regulated via a complex set of post-translational modifications of histones, also called histone code, and nucleosome remodeling. The chain is Histone H3.Y from Homo sapiens (Human).